The sequence spans 349 residues: Aminomethyltransferase (349 aa).

It belongs to the GcvT family. The glycine cleavage system is composed of four proteins: P, T, L and H.

The enzyme catalyses N(6)-[(R)-S(8)-aminomethyldihydrolipoyl]-L-lysyl-[protein] + (6S)-5,6,7,8-tetrahydrofolate = N(6)-[(R)-dihydrolipoyl]-L-lysyl-[protein] + (6R)-5,10-methylene-5,6,7,8-tetrahydrofolate + NH4(+). Its function is as follows. The glycine cleavage system catalyzes the degradation of glycine. This is Aminomethyltransferase from Thermus thermophilus (strain ATCC BAA-163 / DSM 7039 / HB27).